A 420-amino-acid polypeptide reads, in one-letter code: Light-independent protochlorophyllide reductase subunit N (420 aa).

Residues cysteine 21, cysteine 46, and cysteine 103 each contribute to the [4Fe-4S] cluster site.

Belongs to the BchN/ChlN family. In terms of assembly, protochlorophyllide reductase is composed of three subunits; BchL, BchN and BchB. Forms a heterotetramer of two BchB and two BchN subunits. It depends on [4Fe-4S] cluster as a cofactor.

It catalyses the reaction chlorophyllide a + oxidized 2[4Fe-4S]-[ferredoxin] + 2 ADP + 2 phosphate = protochlorophyllide a + reduced 2[4Fe-4S]-[ferredoxin] + 2 ATP + 2 H2O. The protein operates within porphyrin-containing compound metabolism; bacteriochlorophyll biosynthesis (light-independent). Component of the dark-operative protochlorophyllide reductase (DPOR) that uses Mg-ATP and reduced ferredoxin to reduce ring D of protochlorophyllide (Pchlide) to form chlorophyllide a (Chlide). This reaction is light-independent. The NB-protein (BchN-BchB) is the catalytic component of the complex. This chain is Light-independent protochlorophyllide reductase subunit N, found in Chlorobium phaeobacteroides (strain DSM 266 / SMG 266 / 2430).